Consider the following 1172-residue polypeptide: Lysylphosphatidylglycerol biosynthesis bifunctional protein LysX (1172 aa).

The tract at residues 1-34 is disordered; that stretch reads MGLHLTVPGLRRDGRGVQSNSHDTSSKTTADISR. The interval 1–663 is phosphatidylglycerol lysyltransferase; sequence MGLHLTVPGL…LLHHDGSAPD (663 aa). Residues 17–31 show a composition bias toward polar residues; it reads VQSNSHDTSSKTTAD. Transmembrane regions (helical) follow at residues 80–100, 122–142, 146–166, 177–197, 214–234, 272–292, and 612–632; these read VPAAAGWTVGVIATLSLLASV, FPDTNFAWSFVLALLAAALTA, IAWLVLLANMVLAAVVNAAEI, FGENLGFAVHVVAIVVLVLGY, AVWLAGAVVGIVASWGLVELF, AIFGLFGAFALIGAAIVLFLS, and VIPRVGVASVIAEGFLVLPFS. The tract at residues 664-1172 is lysine--tRNA ligase; it reads VSGLRQVGLT…TLPFPLAKPH (509 aa). A DNA-binding region (OB) is located at residues 726–804; it reads VSVSGRIMRI…SLIVSGWRLI (79 aa). Mg(2+) is bound by residues aspartate 1084 and glutamate 1091.

In the N-terminal section; belongs to the LPG synthetase family. It in the C-terminal section; belongs to the class-II aminoacyl-tRNA synthetase family. Mg(2+) serves as cofactor.

The protein resides in the cell membrane. It carries out the reaction tRNA(Lys) + L-lysine + ATP = L-lysyl-tRNA(Lys) + AMP + diphosphate. It catalyses the reaction L-lysyl-tRNA(Lys) + a 1,2-diacyl-sn-glycero-3-phospho-(1'-sn-glycerol) = a 1,2-diacyl-sn-glycero-3-phospho-1'-(3'-O-L-lysyl)-sn-glycerol + tRNA(Lys). Catalyzes the production of L-lysyl-tRNA(Lys)transfer and the transfer of a lysyl group from L-lysyl-tRNA(Lys) to membrane-bound phosphatidylglycerol (PG), which produces lysylphosphatidylglycerol (LPG), one of the components of the bacterial membrane with a positive net charge. LPG synthesis contributes to the resistance to cationic antimicrobial peptides (CAMPs) and likely protects M.tuberculosis against the CAMPs produced by competiting microorganisms (bacteriocins). In fact, the modification of anionic phosphatidylglycerol with positively charged L-lysine results in repulsion of the peptides. This Mycobacterium bovis (strain BCG / Pasteur 1173P2) protein is Lysylphosphatidylglycerol biosynthesis bifunctional protein LysX (lysX).